We begin with the raw amino-acid sequence, 505 residues long: Lysine--tRNA ligase (505 aa).

2 residues coordinate Mg(2+): glutamate 415 and glutamate 422.

The protein belongs to the class-II aminoacyl-tRNA synthetase family. As to quaternary structure, homodimer. It depends on Mg(2+) as a cofactor.

It localises to the cytoplasm. The catalysed reaction is tRNA(Lys) + L-lysine + ATP = L-lysyl-tRNA(Lys) + AMP + diphosphate. This is Lysine--tRNA ligase from Xanthomonas oryzae pv. oryzae (strain MAFF 311018).